Here is a 339-residue protein sequence, read N- to C-terminus: SVP1-like protein 2 (339 aa).

2 WD repeats span residues 177 to 217 (AHAN…LVRE) and 222 to 261 (LDRT…ENKR).

It belongs to the WD repeat PROPPIN family.

Its subcellular location is the vacuole membrane. It is found in the cytoplasmic vesicle membrane. Involved in mitochondrial or peroxisomal functions and amino acid signaling pathways. This Kluyveromyces lactis (strain ATCC 8585 / CBS 2359 / DSM 70799 / NBRC 1267 / NRRL Y-1140 / WM37) (Yeast) protein is SVP1-like protein 2 (HSV2).